The chain runs to 932 residues: von Willebrand factor A domain-containing protein DDB_G0292028 (932 aa).

The disordered stretch occupies residues 1 to 49; the sequence is MNFIKKVIGGGSSKSKTDIKIEDEQHEQQHEQQHEKQQIPDKISTSKVN. Basic and acidic residues predominate over residues 15–39; sequence SKTDIKIEDEQHEQQHEQQHEKQQI. Residues 95 to 222 form the VIT domain; the sequence is LTSPGLNTKV…DVTVNITITS (128 aa). Positions 342–521 constitute a VWFA domain; that stretch reads EFIFVLDCSG…IAMQPTLSNI (180 aa). Disordered regions lie at residues 661–752 and 800–834; these read QQIN…SQAQ and TSQISQSSRECRSKKSSSPTIQKSSSLPSRPSTSS. Residues 677–686 are compositionally biased toward polar residues; the sequence is TRVQGSSSVF. The span at 815–834 shows a compositional bias: low complexity; it reads SSSPTIQKSSSLPSRPSTSS.

The protein is von Willebrand factor A domain-containing protein DDB_G0292028 of Dictyostelium discoideum (Social amoeba).